A 192-amino-acid polypeptide reads, in one-letter code: Adenylate kinase (192 aa).

Position 10 to 15 (Gly10 to Thr15) interacts with ATP. The segment at Ser30–Val59 is NMP. Residues Thr31, Arg36, Gln57–Val59, Gly85–Arg88, and Gln92 each bind AMP. An LID region spans residues Asn126 to Asp142. Arg127 contributes to the ATP binding site. AMP-binding residues include Arg139 and Arg150. Ala178 contacts ATP.

Belongs to the adenylate kinase family. In terms of assembly, monomer.

The protein resides in the cytoplasm. It carries out the reaction AMP + ATP = 2 ADP. Its pathway is purine metabolism; AMP biosynthesis via salvage pathway; AMP from ADP: step 1/1. Its function is as follows. Catalyzes the reversible transfer of the terminal phosphate group between ATP and AMP. Plays an important role in cellular energy homeostasis and in adenine nucleotide metabolism. The sequence is that of Adenylate kinase from Rhizobium meliloti (strain 1021) (Ensifer meliloti).